A 308-amino-acid chain; its full sequence is MTAEQHAGPGAETRCGFVALIGAPNVGKSTLVNALVGSKVTIVSRKVQTTRALIRGIVIEGTSQIILVDTPGIFSPKRRLDRAMVTTAWSGAHDADLVCVLLDAKKGLDDEAQAIIDKAAAVAHQKILVVNKVDLVPREKLLALVAAANEKLPFARTFMISALSGDGVDDLKQALAAMVPPGPFHYPEDQMSDAPMRHLAAEITREKIYSHLHQELPYQSTVETDSWTERKDGSIRIEQTIFVERDSQRKIVLGKGGATIKSIGAQSRKEIAEITGVPVHLFLFVKVRENWGDDPDRYREMGLEFPRE.

The 168-residue stretch at 14-181 (RCGFVALIGA…KQALAAMVPP (168 aa)) folds into the Era-type G domain. The interval 22 to 29 (GAPNVGKS) is G1. 22–29 (GAPNVGKS) is a GTP binding site. The tract at residues 48–52 (QTTRA) is G2. Residues 69 to 72 (DTPG) are G3. GTP contacts are provided by residues 69 to 73 (DTPGI) and 131 to 134 (NKVD). The segment at 131–134 (NKVD) is G4. Residues 160–162 (ISA) form a G5 region. The KH type-2 domain maps to 212–289 (LHQELPYQST…HLFLFVKVRE (78 aa)).

It belongs to the TRAFAC class TrmE-Era-EngA-EngB-Septin-like GTPase superfamily. Era GTPase family. In terms of assembly, monomer.

It is found in the cytoplasm. The protein localises to the cell inner membrane. An essential GTPase that binds both GDP and GTP, with rapid nucleotide exchange. Plays a role in 16S rRNA processing and 30S ribosomal subunit biogenesis and possibly also in cell cycle regulation and energy metabolism. This is GTPase Era from Bradyrhizobium sp. (strain BTAi1 / ATCC BAA-1182).